The sequence spans 410 residues: Class E basic helix-loop-helix protein 41 (410 aa).

K31 is covalently cross-linked (Glycyl lysine isopeptide (Lys-Gly) (interchain with G-Cter in SUMO2)). Residues 44-99 form the bHLH domain; that stretch reads TYKLPHRLIEKKRRDRINECIAQLKDLLPEHLKLTTLGHLEKAVVLELTLKHLKAL. K121 is covalently cross-linked (Glycyl lysine isopeptide (Lys-Gly) (interchain with G-Cter in SUMO2)). One can recognise an Orange domain in the interval 131 to 166; that stretch reads FHSGFQTCAKEVLQYLARFESWTPREPRCAQLVSHL. Disordered stretches follow at residues 209–255 and 360–410; these read IQRT…KRPK and GATA…KDAP. A Glycyl lysine isopeptide (Lys-Gly) (interchain with G-Cter in SUMO2) cross-link involves residue K240.

Homodimer. Heterodimer with BHLHE40/DEC1. Interacts with CIART. Interacts with BMAL1. Interacts with RXRA. Interacts with NR0B2 and HNF1A. Expressed in skeletal muscle, brain and lung.

The protein localises to the nucleus. Functionally, transcriptional repressor involved in the regulation of the circadian rhythm by negatively regulating the activity of the clock genes and clock-controlled genes. Acts as the negative limb of a novel autoregulatory feedback loop (DEC loop) which differs from the one formed by the PER and CRY transcriptional repressors (PER/CRY loop). Both these loops are interlocked as it represses the expression of PER1 and in turn is repressed by PER1/2 and CRY1/2. Represses the activity of the circadian transcriptional activator: CLOCK-BMAL1 heterodimer by competing for the binding to E-box elements (5'-CACGTG-3') found within the promoters of its target genes. Negatively regulates its own expression and the expression of DBP and BHLHE41/DEC2. Acts as a corepressor of RXR and the RXR-LXR heterodimers and represses the ligand-induced RXRA/B/G, NR1H3/LXRA, NR1H4 and VDR transactivation activity. Inhibits HNF1A-mediated transactivation of CYP1A2, CYP2E1 and CYP3A11. The polypeptide is Class E basic helix-loop-helix protein 41 (Bhlhe41) (Mus musculus (Mouse)).